A 75-amino-acid chain; its full sequence is Ferredoxin-thioredoxin reductase, variable chain (75 aa).

Residues 43–46 (QGRP) form an interaction with ferredoxin region.

It belongs to the ferredoxin thioredoxin reductase alpha subunit family. In terms of assembly, heterodimer of subunit A (variable subunit) and subunit B (catalytic subunit). Heterodimeric FTR forms a complex with ferredoxin and thioredoxin.

Its function is as follows. Variable subunit of the ferredoxin-thioredoxin reductase (FTR), which catalyzes the two-electron reduction of thioredoxins by the electrons provided by reduced ferredoxin. In Synechocystis sp. (strain ATCC 27184 / PCC 6803 / Kazusa), this protein is Ferredoxin-thioredoxin reductase, variable chain (ftrV).